The chain runs to 742 residues: Ion-translocating oxidoreductase complex subunit C (742 aa).

4Fe-4S ferredoxin-type domains are found at residues 369–397 (GEPQ…QQLY) and 407–436 (KATT…VQYF). [4Fe-4S] cluster contacts are provided by cysteine 377, cysteine 380, cysteine 383, cysteine 387, cysteine 416, cysteine 419, cysteine 422, and cysteine 426. Residues 602-719 (KLEQQQANAE…PEEQVDPRKA (118 aa)) form a disordered region.

The protein belongs to the 4Fe4S bacterial-type ferredoxin family. RnfC subfamily. The complex is composed of six subunits: RsxA, RsxB, RsxC, RsxD, RsxE and RsxG. [4Fe-4S] cluster is required as a cofactor.

The protein resides in the cell inner membrane. Functionally, part of a membrane-bound complex that couples electron transfer with translocation of ions across the membrane. Required to maintain the reduced state of SoxR. This chain is Ion-translocating oxidoreductase complex subunit C, found in Escherichia coli O6:H1 (strain CFT073 / ATCC 700928 / UPEC).